We begin with the raw amino-acid sequence, 217 residues long: Flagellar L-ring protein 2 (217 aa).

The N-terminal stretch at 1–15 (MRILLALTWLAWLGA) is a signal peptide. C16 carries the N-palmitoyl cysteine lipid modification. The S-diacylglycerol cysteine moiety is linked to residue C16.

The protein belongs to the FlgH family. In terms of assembly, the basal body constitutes a major portion of the flagellar organelle and consists of four rings (L,P,S, and M) mounted on a central rod.

It is found in the cell outer membrane. The protein localises to the bacterial flagellum basal body. Its function is as follows. Assembles around the rod to form the L-ring and probably protects the motor/basal body from shearing forces during rotation. The chain is Flagellar L-ring protein 2 from Burkholderia thailandensis (strain ATCC 700388 / DSM 13276 / CCUG 48851 / CIP 106301 / E264).